Consider the following 118-residue polypeptide: Putative pterin-4-alpha-carbinolamine dehydratase (118 aa).

It belongs to the pterin-4-alpha-carbinolamine dehydratase family.

It catalyses the reaction (4aS,6R)-4a-hydroxy-L-erythro-5,6,7,8-tetrahydrobiopterin = (6R)-L-erythro-6,7-dihydrobiopterin + H2O. The protein is Putative pterin-4-alpha-carbinolamine dehydratase of Xanthomonas euvesicatoria pv. vesicatoria (strain 85-10) (Xanthomonas campestris pv. vesicatoria).